The sequence spans 445 residues: Phosphoglucosamine mutase (445 aa).

Ser102 serves as the catalytic Phosphoserine intermediate. Mg(2+) contacts are provided by Ser102, Asp240, Asp242, and Asp244. Ser102 is modified (phosphoserine).

Belongs to the phosphohexose mutase family. It depends on Mg(2+) as a cofactor. Activated by phosphorylation.

It carries out the reaction alpha-D-glucosamine 1-phosphate = D-glucosamine 6-phosphate. Catalyzes the conversion of glucosamine-6-phosphate to glucosamine-1-phosphate. In Mycolicibacterium vanbaalenii (strain DSM 7251 / JCM 13017 / BCRC 16820 / KCTC 9966 / NRRL B-24157 / PYR-1) (Mycobacterium vanbaalenii), this protein is Phosphoglucosamine mutase.